We begin with the raw amino-acid sequence, 209 residues long: Ion-translocating oxidoreductase complex subunit G (209 aa).

A helical membrane pass occupies residues 9 to 29; that stretch reads GLVLAIFACASTGLVAVTHYL. Thr175 is modified (FMN phosphoryl threonine).

Belongs to the RnfG family. As to quaternary structure, the complex is composed of six subunits: RnfA, RnfB, RnfC, RnfD, RnfE and RnfG. It depends on FMN as a cofactor.

It localises to the cell inner membrane. Its function is as follows. Part of a membrane-bound complex that couples electron transfer with translocation of ions across the membrane. In Vibrio atlanticus (strain LGP32) (Vibrio splendidus (strain Mel32)), this protein is Ion-translocating oxidoreductase complex subunit G.